A 141-amino-acid chain; its full sequence is Large ribosomal subunit protein uL11 (141 aa).

The protein belongs to the universal ribosomal protein uL11 family. In terms of assembly, part of the ribosomal stalk of the 50S ribosomal subunit. Interacts with L10 and the large rRNA to form the base of the stalk. L10 forms an elongated spine to which L12 dimers bind in a sequential fashion forming a multimeric L10(L12)X complex. One or more lysine residues are methylated.

Its function is as follows. Forms part of the ribosomal stalk which helps the ribosome interact with GTP-bound translation factors. The polypeptide is Large ribosomal subunit protein uL11 (Chlorobium phaeovibrioides (strain DSM 265 / 1930) (Prosthecochloris vibrioformis (strain DSM 265))).